Here is a 472-residue protein sequence, read N- to C-terminus: Divalent metal cation transporter MntH (472 aa).

The next 11 helical transmembrane spans lie at 59–79 (LLAF…PGNW), 92–112 (MLLS…ALAA), 144–164 (LAII…LNLL), 167–187 (VPII…LLLM), 196–216 (AFVI…IVLA), 233–253 (VVAD…TVMP), 288–308 (LALM…AAVF), 325–345 (LLAP…ALLA), 377–397 (VLTR…YGEQ), 402–422 (LLLL…IPLL), and 439–459 (WLMV…VKLL).

Belongs to the NRAMP family.

It is found in the cell inner membrane. Functionally, h(+)-stimulated, divalent metal cation uptake system. The protein is Divalent metal cation transporter MntH of Xylella fastidiosa (strain Temecula1 / ATCC 700964).